The sequence spans 286 residues: Diaminopimelate epimerase (286 aa).

2 residues coordinate substrate: asparagine 13 and asparagine 66. Cysteine 75 serves as the catalytic Proton donor. Substrate contacts are provided by residues 76 to 77, asparagine 165, asparagine 198, and 216 to 217; these read GN and ER. Cysteine 225 functions as the Proton acceptor in the catalytic mechanism. 226-227 serves as a coordination point for substrate; sequence GT.

Belongs to the diaminopimelate epimerase family. In terms of assembly, homodimer.

Its subcellular location is the cytoplasm. The enzyme catalyses (2S,6S)-2,6-diaminopimelate = meso-2,6-diaminopimelate. It functions in the pathway amino-acid biosynthesis; L-lysine biosynthesis via DAP pathway; DL-2,6-diaminopimelate from LL-2,6-diaminopimelate: step 1/1. In terms of biological role, catalyzes the stereoinversion of LL-2,6-diaminopimelate (L,L-DAP) to meso-diaminopimelate (meso-DAP), a precursor of L-lysine and an essential component of the bacterial peptidoglycan. The protein is Diaminopimelate epimerase of Thermosynechococcus vestitus (strain NIES-2133 / IAM M-273 / BP-1).